The chain runs to 368 residues: 3-dehydroquinate synthase (368 aa).

Residues 71-76 (DGEAAK), 105-109 (GATTD), 129-130 (TT), Lys-142, and Lys-151 contribute to the NAD(+) site. Glu-184, His-247, and His-263 together coordinate Zn(2+).

The protein belongs to the sugar phosphate cyclases superfamily. Dehydroquinate synthase family. Co(2+) is required as a cofactor. The cofactor is Zn(2+). NAD(+) serves as cofactor.

The protein resides in the cytoplasm. The catalysed reaction is 7-phospho-2-dehydro-3-deoxy-D-arabino-heptonate = 3-dehydroquinate + phosphate. The protein operates within metabolic intermediate biosynthesis; chorismate biosynthesis; chorismate from D-erythrose 4-phosphate and phosphoenolpyruvate: step 2/7. Its function is as follows. Catalyzes the conversion of 3-deoxy-D-arabino-heptulosonate 7-phosphate (DAHP) to dehydroquinate (DHQ). The protein is 3-dehydroquinate synthase of Thermobifida fusca (strain YX).